A 1192-amino-acid polypeptide reads, in one-letter code: Leucine-rich repeat receptor protein kinase EMS1 (1192 aa).

Positions Met1 to Ser18 are cleaved as a signal peptide. N-linked (GlcNAc...) asparagine glycosylation is present at Asn47. LRR repeat units follow at residues Leu64–Ser87, Asn90–Leu112, His114–Pro137, Gln138–Ser160, Ala163–Leu185, Asn187–Ile209, His235–Leu257, Asn259–Cys281, Ser283–Glu304, Val330–Cys352, Met354–Ser376, Ser378–Cys400, Ser402–Pro425, Leu426–Ser447, Asn449–Ala471, Ser473–Thr496, Ser497–Thr520, Ser521–Leu543, Gln545–Tyr567, His581–Cys603, Val605–Thr628, Asn629–Ser651, Lys653–Leu675, Ser677–Gly697, Glu701–Met723, Lys725–Thr748, Gln749–Pro772, and Asn773–Gln795. 3 N-linked (GlcNAc...) asparagine glycosylation sites follow: Asn171, Asn187, and Asn208. N-linked (GlcNAc...) asparagine glycosylation occurs at Asn259. Asn414 and Asn435 each carry an N-linked (GlcNAc...) asparagine glycan. Asn555 is a glycosylation site (N-linked (GlcNAc...) asparagine). N-linked (GlcNAc...) asparagine glycosylation is present at Asn629. 3 N-linked (GlcNAc...) asparagine glycosylation sites follow: Asn682, Asn711, and Asn746. Residues Trp828–Leu848 traverse the membrane as a helical segment. Phosphothreonine is present on Thr914. The Protein kinase domain maps to Phe917–Ile1192. Residues Ile923–Val931 and Lys945 each bind ATP. The residue at position 990 (Tyr990) is a Phosphotyrosine. Residue Asp1043 is the Proton acceptor of the active site. Tyr1085 is modified (phosphotyrosine).

This sequence belongs to the protein kinase superfamily. Ser/Thr protein kinase family. Interacts with TPD1. Autophosphorylates in vitro. As to expression, present in young buds, open flowers and siliques but absent from mature leaves and roots. Strongly expressed in the young organ primordia, and as the anthers and ovules developed, became focused in the microsporangia and in the distal and chalazal regions of the ovule. In cv. Landsberg erecta, only expressed in the anthers of young floral buds.

The protein resides in the cell membrane. The catalysed reaction is L-seryl-[protein] + ATP = O-phospho-L-seryl-[protein] + ADP + H(+). It carries out the reaction L-threonyl-[protein] + ATP = O-phospho-L-threonyl-[protein] + ADP + H(+). Receptor with a serine/threonine-protein kinase activity required for the specification of the correct number of male archesporial initials and for the subsequent specification of tapetal and middle cell layer identities. In seeds, required for enhancing cell size and the rate of embryonic development. The polypeptide is Leucine-rich repeat receptor protein kinase EMS1 (Arabidopsis thaliana (Mouse-ear cress)).